We begin with the raw amino-acid sequence, 301 residues long: Ornithine carbamoyltransferase (301 aa).

Residues R100 and 127–130 (HPCQ) contribute to the carbamoyl phosphate site. Residues N158, D221, and 225–226 (SM) each bind L-ornithine. Carbamoyl phosphate is bound by residues C260 and R288.

Belongs to the aspartate/ornithine carbamoyltransferase superfamily. OTCase family. As to quaternary structure, homododecamer.

The protein localises to the cytoplasm. It carries out the reaction carbamoyl phosphate + L-ornithine = L-citrulline + phosphate + H(+). It participates in amino-acid biosynthesis; L-arginine biosynthesis; L-arginine from L-ornithine and carbamoyl phosphate: step 1/3. Its function is as follows. Reversibly catalyzes the transfer of the carbamoyl group from carbamoyl phosphate (CP) to the N(epsilon) atom of ornithine (ORN) to produce L-citrulline. The protein is Ornithine carbamoyltransferase (argF) of Moritella profunda.